We begin with the raw amino-acid sequence, 163 residues long: RxLR effector protein PITG_13625 (163 aa).

Residues 1–23 (MKVSKAIVALAALCMALLAPAAG) form the signal peptide. Residues 37–52 (RHLRQESAELATTPEE) carry the RxLR-dEER motif.

It belongs to the RxLR effector family.

It localises to the secreted. The protein localises to the host cell membrane. Functionally, effector that enhances P.infestans colonization of Nicotiana benthamiana leaves. The chain is RxLR effector protein PITG_13625 from Phytophthora infestans (strain T30-4) (Potato late blight agent).